We begin with the raw amino-acid sequence, 363 residues long: tRNA(Met) cytidine acetate ligase (363 aa).

Residues 7 to 20 (IAEFNPFHNGHKYL), Gly-96, Asn-152, and Arg-175 each bind ATP.

The protein belongs to the TmcAL family.

The protein localises to the cytoplasm. The catalysed reaction is cytidine(34) in elongator tRNA(Met) + acetate + ATP = N(4)-acetylcytidine(34) in elongator tRNA(Met) + AMP + diphosphate. Catalyzes the formation of N(4)-acetylcytidine (ac(4)C) at the wobble position of elongator tRNA(Met), using acetate and ATP as substrates. First activates an acetate ion to form acetyladenylate (Ac-AMP) and then transfers the acetyl group to tRNA to form ac(4)C34. This Streptococcus thermophilus (strain ATCC BAA-491 / LMD-9) protein is tRNA(Met) cytidine acetate ligase.